Here is a 239-residue protein sequence, read N- to C-terminus: Phosphoribosylaminoimidazole-succinocarboxamide synthase (239 aa).

It belongs to the SAICAR synthetase family.

The enzyme catalyses 5-amino-1-(5-phospho-D-ribosyl)imidazole-4-carboxylate + L-aspartate + ATP = (2S)-2-[5-amino-1-(5-phospho-beta-D-ribosyl)imidazole-4-carboxamido]succinate + ADP + phosphate + 2 H(+). It participates in purine metabolism; IMP biosynthesis via de novo pathway; 5-amino-1-(5-phospho-D-ribosyl)imidazole-4-carboxamide from 5-amino-1-(5-phospho-D-ribosyl)imidazole-4-carboxylate: step 1/2. The chain is Phosphoribosylaminoimidazole-succinocarboxamide synthase from Shouchella clausii (strain KSM-K16) (Alkalihalobacillus clausii).